A 345-amino-acid polypeptide reads, in one-letter code: Methionine import ATP-binding protein MetN (345 aa).

Positions Ile2 to Ile241 constitute an ABC transporter domain. Position 38–45 (Gly38–Ser45) interacts with ATP.

Belongs to the ABC transporter superfamily. Methionine importer (TC 3.A.1.24) family. As to quaternary structure, the complex is composed of two ATP-binding proteins (MetN), two transmembrane proteins (MetI) and a solute-binding protein (MetQ).

It is found in the cell inner membrane. The enzyme catalyses L-methionine(out) + ATP + H2O = L-methionine(in) + ADP + phosphate + H(+). It carries out the reaction D-methionine(out) + ATP + H2O = D-methionine(in) + ADP + phosphate + H(+). In terms of biological role, part of the ABC transporter complex MetNIQ involved in methionine import. Responsible for energy coupling to the transport system. The chain is Methionine import ATP-binding protein MetN from Haemophilus influenzae (strain 86-028NP).